A 1036-amino-acid chain; its full sequence is Presequence protease, mitochondrial (1036 aa).

A mitochondrion-targeting transit peptide spans 1-15 (MWRFSGRRGLCAVQR). Histidine 104 contacts Zn(2+). The active-site Proton acceptor is the glutamate 107. Histidine 108 and glutamate 205 together coordinate Zn(2+). Cysteine 119 and cysteine 556 are disulfide-bonded. Position 759 is an N6-acetyllysine (lysine 759). Lysine 770 is modified (N6-acetyllysine; alternate). Lysine 770 carries the post-translational modification N6-succinyllysine; alternate. Residues 806 to 833 (SKKERKPVRPHIVEKPTPSGPSGAAHVS) are disordered. An N6-succinyllysine modification is found at lysine 848. Lysine 883 carries the post-translational modification N6-acetyllysine. Lysine 945 bears the N6-succinyllysine mark.

It belongs to the peptidase M16 family. PreP subfamily. As to quaternary structure, monomer and homodimer; homodimerization is induced by binding of the substrate. It depends on Zn(2+) as a cofactor. Post-translationally, a disulfide bond locks the enzyme in the closed conformation preventing substrate entry into the catalytic chamber.

Its subcellular location is the mitochondrion matrix. Mainly exists in a closed and catalytically competent conformation but a closed-to-open switch allows substrate entry into the catalytic chamber. Substrate binding induces closure and dimerization. A disulfide bond may lock the enzyme in a closed conformation preventing substrate entry into the catalytic chamber, participating in redox regulation of the enzyme. Inhibited by metal-chelating agents. Inhibited by nickel and zinc excess, and slightly activated by manganese. Functionally, metalloendopeptidase of the mitochondrial matrix that functions in peptide cleavage and degradation rather than in protein processing. Has an ATP-independent activity. Specifically cleaves peptides in the range of 5 to 65 residues. Shows a preference for cleavage after small polar residues and before basic residues, but without any positional preference. Degrades the transit peptides of mitochondrial proteins after their cleavage. Also degrades other unstructured peptides. It is also able to degrade amyloid-beta protein 40, one of the peptides produced by APP processing, when it accumulates in mitochondrion. It is a highly efficient protease, at least toward amyloid-beta protein 40. Cleaves that peptide at a specific position and is probably not processive, releasing digested peptides intermediates that can be further cleaved subsequently. It is also able to degrade amyloid-beta protein 42. This Mus musculus (Mouse) protein is Presequence protease, mitochondrial.